The primary structure comprises 85 residues: UPF0297 protein CLL_A1175 (85 aa).

The protein belongs to the UPF0297 family.

This is UPF0297 protein CLL_A1175 from Clostridium botulinum (strain Eklund 17B / Type B).